The sequence spans 182 residues: Large ribosomal subunit protein uL5c (182 aa).

It belongs to the universal ribosomal protein uL5 family. In terms of assembly, part of the 50S ribosomal subunit; contacts the 5S rRNA.

The protein localises to the plastid. Its subcellular location is the chloroplast. Its function is as follows. Binds 5S rRNA, forms part of the central protuberance of the 50S subunit. This is Large ribosomal subunit protein uL5c (rpl5) from Emiliania huxleyi (Coccolithophore).